We begin with the raw amino-acid sequence, 162 residues long: Nitric oxide synthase, inducible (162 aa).

Residues 24 to 37 show a composition bias toward polar residues; the sequence is LQYHSLSKQQNESP. Residues 24–65 form a disordered region; the sequence is LQYHSLSKQQNESPQPLVGTGKKSPESLVKPDATPLSSPRHV. Residues Cys-90 and Cys-95 each contribute to the Zn(2+) site. (6R)-L-erythro-5,6,7,8-tetrahydrobiopterin is bound at residue Ser-98. Glu-132 contributes to the L-arginine binding site. His-160 contributes to the FAD binding site.

This sequence belongs to the NOS family. In terms of assembly, homodimer. Interacts with NHERF1. Interacts with GAPDH; induced by oxidatively-modified low-densitity lipoprotein (LDL(ox)). Interacts with S100A8 and S100A9 to form the iNOS-S100A8/9 transnitrosylase complex. Interacts with SPSB1, SPSB2 and SPSB4. Interacts with ELOC and CUL5 in the presence of SPSB1 or SPSB2 or SPSB4. Forms a complex with ASL, ASS1 and HSP90AA1; the complex regulates cell-autonomous L-arginine synthesis and citrulline recycling while channeling extracellular L-arginine to nitric oxide synthesis pathway. Heme b is required as a cofactor. It depends on FAD as a cofactor. The cofactor is FMN. (6R)-L-erythro-5,6,7,8-tetrahydrobiopterin serves as cofactor. Post-translationally, polyubiquitinated; mediated by SPSB1, SPSB2 and SPSB4, leading to proteasomal degradation.

The protein resides in the cytoplasm. Its subcellular location is the cytosol. The catalysed reaction is 2 L-arginine + 3 NADPH + 4 O2 + H(+) = 2 L-citrulline + 2 nitric oxide + 3 NADP(+) + 4 H2O. Regulated by calcium/calmodulin. Produces nitric oxide (NO) which is a messenger molecule with diverse functions throughout the body. In macrophages, NO mediates tumoricidal and bactericidal actions. Also has nitrosylase activity and mediates cysteine S-nitrosylation of cytoplasmic target proteins such PTGS2/COX2. As component of the iNOS-S100A8/9 transnitrosylase complex involved in the selective inflammatory stimulus-dependent S-nitrosylation of GAPDH implicated in regulation of the GAIT complex activity and probably multiple targets including ANXA5, EZR, MSN and VIM. Involved in inflammation, enhances the synthesis of pro-inflammatory mediators such as IL6 and IL8. This chain is Nitric oxide synthase, inducible (NOS2), found in Macaca mulatta (Rhesus macaque).